A 329-amino-acid chain; its full sequence is Ankyrin repeat and SOCS box protein 5 (329 aa).

ANK repeat units lie at residues 69–98 (ADRS…NVNA), 102–131 (DHVT…NVNA), 135–164 (DGVT…KPQL), 167–196 (CLPS…DVDQ), 200–229 (HLGT…DVQK), and 232–261 (YWDT…DINA). Residues 278–329 (LVERLLLQHEATPSSLCQLCRLCIRNYIGRPRLHLIPQLQLPTLLQNFLQYR) form the SOCS box domain.

It belongs to the ankyrin SOCS box (ASB) family.

It participates in protein modification; protein ubiquitination. Its function is as follows. May be a substrate-recognition component of a SCF-like ECS (Elongin-Cullin-SOCS-box protein) E3 ubiquitin-protein ligase complex which mediates the ubiquitination and subsequent proteasomal degradation of target proteins. May play a role in the initiation of arteriogenesis. The chain is Ankyrin repeat and SOCS box protein 5 (ASB5) from Bos taurus (Bovine).